Here is a 234-residue protein sequence, read N- to C-terminus: Small ribosomal subunit protein uS3 (234 aa).

The region spanning 39 to 107 (IRKFLKKELY…EVSINIKEVK (69 aa)) is the KH type-2 domain.

The protein belongs to the universal ribosomal protein uS3 family. As to quaternary structure, part of the 30S ribosomal subunit. Forms a tight complex with proteins S10 and S14.

Binds the lower part of the 30S subunit head. Binds mRNA in the 70S ribosome, positioning it for translation. The polypeptide is Small ribosomal subunit protein uS3 (Helicobacter acinonychis (strain Sheeba)).